Consider the following 328-residue polypeptide: Ribosomal RNA small subunit methyltransferase C (328 aa).

This sequence belongs to the methyltransferase superfamily. RsmC family. As to quaternary structure, monomer.

It is found in the cytoplasm. The catalysed reaction is guanosine(1207) in 16S rRNA + S-adenosyl-L-methionine = N(2)-methylguanosine(1207) in 16S rRNA + S-adenosyl-L-homocysteine + H(+). Its function is as follows. Specifically methylates the guanine in position 1207 of 16S rRNA in the 30S particle. In Pasteurella multocida (strain Pm70), this protein is Ribosomal RNA small subunit methyltransferase C.